The sequence spans 423 residues: Aspartate aminotransferase, mitochondrial (423 aa).

Residues 1 to 22 (MALLQSRLLLSAPRRAAATARA) constitute a mitochondrion transit peptide. Residues glycine 58, tryptophan 155, and asparagine 208 each contribute to the substrate site. At lysine 272 the chain carries N6-(pyridoxal phosphate)lysine. Arginine 400 contacts substrate.

It belongs to the class-I pyridoxal-phosphate-dependent aminotransferase family. As to quaternary structure, homodimer. Pyridoxal 5'-phosphate serves as cofactor. As to expression, detected in heart (at protein level).

The protein localises to the mitochondrion matrix. The enzyme catalyses L-aspartate + 2-oxoglutarate = oxaloacetate + L-glutamate. The catalysed reaction is L-kynurenine + 2-oxoglutarate = kynurenate + L-glutamate + H2O. In terms of biological role, catalyzes the irreversible transamination of the L-tryptophan metabolite L-kynurenine to form kynurenic acid (KA). As a member of the malate-aspartate shuttle, it has a key role in the intracellular NAD(H) redox balance. Is important for metabolite exchange between mitochondria and cytosol, and for amino acid metabolism. In Gallus gallus (Chicken), this protein is Aspartate aminotransferase, mitochondrial (GOT2).